Here is a 299-residue protein sequence, read N- to C-terminus: Oxygen-dependent coproporphyrinogen-III oxidase (299 aa).

Serine 92 contacts substrate. Positions 96 and 106 each coordinate Mn(2+). Histidine 106 acts as the Proton donor in catalysis. Substrate is bound at residue 108–110 (NVR). Histidine 145 and histidine 175 together coordinate Mn(2+). The interval 240-275 (YVEFNLVWDRGTLFGLQTGGRTESILMSMPPLVRWE) is important for dimerization. A substrate-binding site is contributed by 258–260 (GGR).

It belongs to the aerobic coproporphyrinogen-III oxidase family. As to quaternary structure, homodimer. The cofactor is Mn(2+).

The protein localises to the cytoplasm. The enzyme catalyses coproporphyrinogen III + O2 + 2 H(+) = protoporphyrinogen IX + 2 CO2 + 2 H2O. The protein operates within porphyrin-containing compound metabolism; protoporphyrin-IX biosynthesis; protoporphyrinogen-IX from coproporphyrinogen-III (O2 route): step 1/1. Functionally, involved in the heme biosynthesis. Catalyzes the aerobic oxidative decarboxylation of propionate groups of rings A and B of coproporphyrinogen-III to yield the vinyl groups in protoporphyrinogen-IX. The protein is Oxygen-dependent coproporphyrinogen-III oxidase of Escherichia coli (strain SE11).